We begin with the raw amino-acid sequence, 171 residues long: S-ribosylhomocysteine lyase (171 aa).

Residues histidine 54, histidine 58, and cysteine 128 each contribute to the Fe cation site.

Belongs to the LuxS family. In terms of assembly, homodimer. The cofactor is Fe cation.

The enzyme catalyses S-(5-deoxy-D-ribos-5-yl)-L-homocysteine = (S)-4,5-dihydroxypentane-2,3-dione + L-homocysteine. Its function is as follows. Involved in the synthesis of autoinducer 2 (AI-2) which is secreted by bacteria and is used to communicate both the cell density and the metabolic potential of the environment. The regulation of gene expression in response to changes in cell density is called quorum sensing. Catalyzes the transformation of S-ribosylhomocysteine (RHC) to homocysteine (HC) and 4,5-dihydroxy-2,3-pentadione (DPD). The chain is S-ribosylhomocysteine lyase from Proteus mirabilis (strain HI4320).